We begin with the raw amino-acid sequence, 78 residues long: Acyl carrier protein (78 aa).

The region spanning 2–77 (SDILERVRKI…DAVKFITEKT (76 aa)) is the Carrier domain. Position 37 is an O-(pantetheine 4'-phosphoryl)serine (serine 37).

Belongs to the acyl carrier protein (ACP) family. 4'-phosphopantetheine is transferred from CoA to a specific serine of apo-ACP by AcpS. This modification is essential for activity because fatty acids are bound in thioester linkage to the sulfhydryl of the prosthetic group.

Its subcellular location is the cytoplasm. It functions in the pathway lipid metabolism; fatty acid biosynthesis. Carrier of the growing fatty acid chain in fatty acid biosynthesis. This is Acyl carrier protein from Caulobacter vibrioides (strain ATCC 19089 / CIP 103742 / CB 15) (Caulobacter crescentus).